Here is a 92-residue protein sequence, read N- to C-terminus: DNA-directed RNA polymerase subunit Rpo11 (92 aa).

The protein belongs to the archaeal Rpo11/eukaryotic RPB11/RPC19 RNA polymerase subunit family. Part of the RNA polymerase complex.

Its subcellular location is the cytoplasm. The enzyme catalyses RNA(n) + a ribonucleoside 5'-triphosphate = RNA(n+1) + diphosphate. In terms of biological role, DNA-dependent RNA polymerase (RNAP) catalyzes the transcription of DNA into RNA using the four ribonucleoside triphosphates as substrates. The polypeptide is DNA-directed RNA polymerase subunit Rpo11 (Methanosarcina mazei (strain ATCC BAA-159 / DSM 3647 / Goe1 / Go1 / JCM 11833 / OCM 88) (Methanosarcina frisia)).